Here is a 107-residue protein sequence, read N- to C-terminus: Iron-binding protein IscA (107 aa).

Fe cation is bound by residues C35, C99, and C101.

It belongs to the HesB/IscA family. As to quaternary structure, homodimer; may form tetramers and higher multimers. Requires Fe cation as cofactor.

Is able to transfer iron-sulfur clusters to apo-ferredoxin. Multiple cycles of [2Fe2S] cluster formation and transfer are observed, suggesting that IscA acts catalytically. Recruits intracellular free iron so as to provide iron for the assembly of transient iron-sulfur cluster in IscU in the presence of IscS, L-cysteine and the thioredoxin reductase system TrxA/TrxB. The protein is Iron-binding protein IscA of Salmonella newport (strain SL254).